The chain runs to 371 residues: Anhydro-N-acetylmuramic acid kinase (371 aa).

An ATP-binding site is contributed by 12–19 (GTSADGID).

This sequence belongs to the anhydro-N-acetylmuramic acid kinase family.

It carries out the reaction 1,6-anhydro-N-acetyl-beta-muramate + ATP + H2O = N-acetyl-D-muramate 6-phosphate + ADP + H(+). It functions in the pathway amino-sugar metabolism; 1,6-anhydro-N-acetylmuramate degradation. The protein operates within cell wall biogenesis; peptidoglycan recycling. In terms of biological role, catalyzes the specific phosphorylation of 1,6-anhydro-N-acetylmuramic acid (anhMurNAc) with the simultaneous cleavage of the 1,6-anhydro ring, generating MurNAc-6-P. Is required for the utilization of anhMurNAc either imported from the medium or derived from its own cell wall murein, and thus plays a role in cell wall recycling. The sequence is that of Anhydro-N-acetylmuramic acid kinase from Saccharophagus degradans (strain 2-40 / ATCC 43961 / DSM 17024).